The primary structure comprises 120 residues: Large ribosomal subunit protein uL18 (120 aa).

This sequence belongs to the universal ribosomal protein uL18 family. As to quaternary structure, part of the 50S ribosomal subunit; part of the 5S rRNA/L5/L18/L25 subcomplex. Contacts the 5S and 23S rRNAs.

Its function is as follows. This is one of the proteins that bind and probably mediate the attachment of the 5S RNA into the large ribosomal subunit, where it forms part of the central protuberance. In Herminiimonas arsenicoxydans, this protein is Large ribosomal subunit protein uL18.